The following is a 437-amino-acid chain: Transcription factor AP-2-alpha (437 aa).

Residue lysine 10 forms a Glycyl lysine isopeptide (Lys-Gly) (interchain with G-Cter in SUMO); alternate linkage. A Glycyl lysine isopeptide (Lys-Gly) (interchain with G-Cter in SUMO2); alternate cross-link involves residue lysine 10. Residues 14–107 (CEDRHDGTSN…GQRQSQESGL (94 aa)) are disordered. The PPxY motif signature appears at 57–62 (YFPPPY). 2 stretches are compositionally biased toward low complexity: residues 65 to 74 (IYPQSQDPYS) and 88 to 101 (QPQP…GQRQ). Glycyl lysine isopeptide (Lys-Gly) (interchain with G-Cter in SUMO2) cross-links involve residues lysine 177 and lysine 184. The residue at position 239 (serine 239) is a Phosphoserine; by PKA. The interval 280 to 410 (RRKAANVTLL…YLTEALKAMD (131 aa)) is H-S-H (helix-span-helix), dimerization. Residues 414–427 (LSNNPNSHTDNSAK) are compositionally biased toward polar residues. The interval 414–437 (LSNNPNSHTDNSAKSSDKEEKHRK) is disordered. The span at 428–437 (SSDKEEKHRK) shows a compositional bias: basic and acidic residues.

This sequence belongs to the AP-2 family. In terms of assembly, binds DNA as a dimer. Can form homodimers or heterodimers with other AP-2 family members. Interacts with WWOX. Interacts with UBE2I. Interacts with RALBP1 in a complex also containing EPN1 and NUMB during interphase and mitosis. Interacts with CITED4. Interacts with KCTD1; this interaction represses transcription activation. Interacts (via C-terminus) with CITED2 (via C-terminus); the interaction stimulates TFAP2A-transcriptional activation. Interacts (via N-terminus) with EP300 (via N-terminus); the interaction requires CITED2. Interacts with KCTD15; this interaction inhibits TFAP2A transcriptional activation. Post-translationally, sumoylated on Lys-10; which inhibits transcriptional activity.

The protein localises to the nucleus. Sequence-specific DNA-binding protein that interacts with inducible viral and cellular enhancer elements to regulate transcription of selected genes. AP-2 factors bind to the consensus sequence 5'-GCCNNNGGC-3' and activate genes involved in a large spectrum of important biological functions including proper eye, face, body wall, limb and neural tube development. They also suppress a number of genes including MCAM/MUC18, C/EBP alpha and MYC. AP-2-alpha is the only AP-2 protein required for early morphogenesis of the lens vesicle. Together with the CITED2 coactivator, stimulates the PITX2 P1 promoter transcription activation. Associates with chromatin to the PITX2 P1 promoter region. In Mus musculus (Mouse), this protein is Transcription factor AP-2-alpha (Tfap2a).